Here is a 564-residue protein sequence, read N- to C-terminus: E3 ubiquitin-protein ligase RNF168 (564 aa).

Residues 16–55 form an RING-type zinc finger; the sequence is CGICMEILVEPVTLPCNHTLCNPCFQSTVEKANLCCPFCR. Serine 70 is modified (phosphoserine). The LR motif 1 signature appears at 110 to 128; sequence LSKPGELRREYEEEISKVE. Serine 134 is modified (phosphoserine). The UMI motif motif lies at 143 to 151; the sequence is EEYIQRLLA. 2 disordered regions span residues 149–179 and 193–291; these read LLAE…EELA and NILA…QGPE. The segment covering 157 to 179 has biased composition (basic and acidic residues); the sequence is EKRRTERRRSEMEEQLRGDEELA. The MIU motif 1 signature appears at 168–191; the sequence is MEEQLRGDEELARRLSTSINSNYE. Serine 197 carries the phosphoserine modification. A Glycyl lysine isopeptide (Lys-Gly) (interchain with G-Cter in SUMO2) cross-link involves residue lysine 210. The segment covering 242-259 has biased composition (basic and acidic residues); the sequence is KTEHGEDMCKSKETDSSD. Polar residues predominate over residues 275–288; it reads PTHSPQTCPETQGQ. Threonine 348 and threonine 361 each carry phosphothreonine. Residues serine 413 and serine 414 each carry the phosphoserine modification. The MIU motif 2 signature appears at 438–461; that stretch reads RHKQEEQDRLLALQLQKEADKEKM. The segment at 455–564 is disordered; it reads EADKEKMVPN…QKSILQMFQR (110 aa). The LR motif 2 motif lies at 465–476; sequence RQKGSPDQYQLR. The segment covering 466-480 has biased composition (polar residues); the sequence is QKGSPDQYQLRTSSP. Serine 469 is subject to Phosphoserine. The span at 491 to 515 shows a compositional bias: basic and acidic residues; the sequence is NVKDRNSPKQTADRSKSQRSRKGEY. Polar residues-rich tracts occupy residues 519-531 and 555-564; these read FEST…NGTK and QKSILQMFQR. Residue lysine 524 forms a Glycyl lysine isopeptide (Lys-Gly) (interchain with G-Cter in SUMO2) linkage.

Belongs to the RNF168 family. As to quaternary structure, monomer. Interacts with UBE2N/UBC13. In terms of processing, sumoylated with SUMO1 by PIAS4 in response to double-strand breaks (DSBs). Ubiquitinated.

Its subcellular location is the nucleus. It catalyses the reaction S-ubiquitinyl-[E2 ubiquitin-conjugating enzyme]-L-cysteine + [acceptor protein]-L-lysine = [E2 ubiquitin-conjugating enzyme]-L-cysteine + N(6)-ubiquitinyl-[acceptor protein]-L-lysine.. It functions in the pathway protein modification; protein ubiquitination. Functionally, E3 ubiquitin-protein ligase required for accumulation of repair proteins to sites of DNA damage. Acts with UBE2N/UBC13 to amplify the RNF8-dependent histone ubiquitination. Recruited to sites of DNA damage at double-strand breaks (DSBs) by binding to ubiquitinated histone H2A and H2AX and amplifies the RNF8-dependent H2A ubiquitination, promoting the formation of 'Lys-63'-linked ubiquitin conjugates. This leads to concentrate ubiquitinated histones H2A and H2AX at DNA lesions to the threshold required for recruitment of TP53BP1 and BRCA1. Also recruited at DNA interstrand cross-links (ICLs) sites and promotes accumulation of 'Lys-63'-linked ubiquitination of histones H2A and H2AX, leading to recruitment of FAAP20 and Fanconi anemia (FA) complex, followed by interstrand cross-link repair. H2A ubiquitination also mediates the ATM-dependent transcriptional silencing at regions flanking DSBs in cis, a mechanism to avoid collision between transcription and repair intermediates. Also involved in class switch recombination in immune system, via its role in regulation of DSBs repair. Following DNA damage, promotes the ubiquitination and degradation of JMJD2A/KDM4A in collaboration with RNF8, leading to unmask H4K20me2 mark and promote the recruitment of TP53BP1 at DNA damage sites. Not able to initiate 'Lys-63'-linked ubiquitination in vitro; possibly due to partial occlusion of the UBE2N/UBC13-binding region. Catalyzes monoubiquitination of 'Lys-13' and 'Lys-15' of nucleosomal histone H2A (H2AK13Ub and H2AK15Ub, respectively). The polypeptide is E3 ubiquitin-protein ligase RNF168 (Rattus norvegicus (Rat)).